Consider the following 443-residue polypeptide: Tol-Pal system protein TolB (443 aa).

Positions 1-33 (MKIGIINTKIRTVFSAFACMIAASLVCTMPARA) are cleaved as a signal peptide.

It belongs to the TolB family. The Tol-Pal system is composed of five core proteins: the inner membrane proteins TolA, TolQ and TolR, the periplasmic protein TolB and the outer membrane protein Pal. They form a network linking the inner and outer membranes and the peptidoglycan layer.

Its subcellular location is the periplasm. In terms of biological role, part of the Tol-Pal system, which plays a role in outer membrane invagination during cell division and is important for maintaining outer membrane integrity. The chain is Tol-Pal system protein TolB from Brucella melitensis biotype 1 (strain ATCC 23456 / CCUG 17765 / NCTC 10094 / 16M).